The following is a 285-amino-acid chain: Protein pxr1 (285 aa).

Residues 1–11 (MGLAAPRKKIK) are compositionally biased toward basic residues. The segment at 1–23 (MGLAAPRKKIKISHDPNNTNWSR) is disordered. One can recognise a G-patch domain in the interval 25–79 (TSGFGHKILSSQGWTPGSFLGARNAAHAEMFTAASASHIKVVLKDDTLGLGARPK). The disordered stretch occupies residues 144 to 263 (TPIVTEEPQG…MGRHVFRGRH (120 aa)). Residues 152 to 163 (QGIHKDKQEDKL) are compositionally biased toward basic and acidic residues. Basic residues predominate over residues 190-208 (KKKKSKSKNHREKKDRKRK). The span at 224–234 (RSTEKKSKATR) shows a compositional bias: basic and acidic residues. A compositionally biased stretch (basic residues) spans 254 to 263 (MGRHVFRGRH).

It belongs to the PINX1 family.

Its subcellular location is the nucleus. It localises to the nucleolus. In terms of biological role, involved in rRNA-processing at A0, A1 and A2 sites and negatively regulates telomerase. The polypeptide is Protein pxr1 (pxr1) (Aspergillus niger (strain ATCC MYA-4892 / CBS 513.88 / FGSC A1513)).